The primary structure comprises 509 residues: Coiled-coil domain-containing protein 181 (509 aa).

Residues 60–82 (EHTKQHSDPDKSLQDDVSPRRND) are compositionally biased toward basic and acidic residues. Disordered regions lie at residues 60–121 (EHTK…EEDE) and 285–367 (GEPL…EEKE). The segment covering 320–334 (RTQSARISPVTSTYC) has biased composition (polar residues). Residues 335–375 (LSPRQKELQKQLEQKREKLKREEEQRKIEEEKEKKRENDIV) adopt a coiled-coil conformation. Residues 338–367 (RQKELQKQLEQKREKLKREEEQRKIEEEKE) show a composition bias toward basic and acidic residues.

It belongs to the CCDC181 family. Homodimer. Interacts with HOOK1. Interacts with HOOK2. Interacts with HOOK3.

The protein resides in the cytoplasm. It localises to the cytoskeleton. Its subcellular location is the cell projection. It is found in the cilium. The protein localises to the flagellum. Functionally, microtubule-binding protein that localizes to the microtubular manchette of elongating spermatids. The polypeptide is Coiled-coil domain-containing protein 181 (Macaca fascicularis (Crab-eating macaque)).